The chain runs to 190 residues: MGMNTGLVIAGVAGATALAISAAAIPFVAPALRRVCIPYVPATTEQLANVSRALSLATSSNSNKKGTLIDLGSGDGRVVLQCAREGFNSTGVELNSILVAYSKYRSIREGLGKETRFMRKNIFKTDLNPYQTAVIFGAESLMGDLVPKLSEMRSNTNLLACRFPLPENDAWKLEHQIGEGIDAVWVYKRN.

Belongs to the ANT/ATPSC lysine N-methyltransferase family.

The protein resides in the mitochondrion. The catalysed reaction is L-lysyl-[protein] + 3 S-adenosyl-L-methionine = N(6),N(6),N(6)-trimethyl-L-lysyl-[protein] + 3 S-adenosyl-L-homocysteine + 3 H(+). Mitochondrial protein-lysine N-methyltransferase that trimethylates ATP synthase subunit C. Trimethylation is required for proper incorporation of the C subunit into the ATP synthase complex and mitochondrial respiration. In Caenorhabditis elegans, this protein is ATP synthase subunit C lysine N-methyltransferase.